Consider the following 598-residue polypeptide: 2-succinyl-5-enolpyruvyl-6-hydroxy-3-cyclohexene-1-carboxylate synthase (598 aa).

This sequence belongs to the TPP enzyme family. MenD subfamily. As to quaternary structure, homodimer. Requires Mg(2+) as cofactor. Mn(2+) serves as cofactor. It depends on thiamine diphosphate as a cofactor.

The enzyme catalyses isochorismate + 2-oxoglutarate + H(+) = 5-enolpyruvoyl-6-hydroxy-2-succinyl-cyclohex-3-ene-1-carboxylate + CO2. Its pathway is quinol/quinone metabolism; 1,4-dihydroxy-2-naphthoate biosynthesis; 1,4-dihydroxy-2-naphthoate from chorismate: step 2/7. It participates in cofactor biosynthesis; phylloquinone biosynthesis. Its function is as follows. Catalyzes the thiamine diphosphate-dependent decarboxylation of 2-oxoglutarate and the subsequent addition of the resulting succinic semialdehyde-thiamine pyrophosphate anion to isochorismate to yield 2-succinyl-5-enolpyruvyl-6-hydroxy-3-cyclohexene-1-carboxylate (SEPHCHC). The sequence is that of 2-succinyl-5-enolpyruvyl-6-hydroxy-3-cyclohexene-1-carboxylate synthase from Prochlorococcus marinus (strain NATL2A).